A 400-amino-acid polypeptide reads, in one-letter code: Large envelope protein (400 aa).

Residue Met1 is modified to N-acetylmethionine. Gly2 is lipidated: N-myristoyl glycine; by host. A pre-S1 region spans residues Gly2–Ala119. Residues Gly2–Asn174 form a pre-S region. The Virion surface; in external conformation segment spans residues Gly2–Gly181. The Intravirion; in internal conformation portion of the chain corresponds to Gly2 to Arg253. Pro4 carries an N-linked (GlcNAc...) asparagine glycan. The tract at residues Val84 to Asp114 is disordered. Residues Met120 to Asn174 form a pre-S2 region. The helical transmembrane segment at Leu182 to Ile202 threads the bilayer. At Pro203–Arg253 the chain is on the intravirion; in external conformation side. A helical membrane pass occupies residues Phe254–Tyr274. Residues Gln275–Ser348 are Virion surface-facing. A glycan (N-linked (GlcNAc...) asparagine; by host) is linked at Asn320. The chain crosses the membrane as a helical span at residues Leu349–Ile369. At Trp370–Trp375 the chain is on the intravirion side. A helical transmembrane segment spans residues Gly376–Val398. At Ser399 to Ile400 the chain is on the virion surface side.

Belongs to the orthohepadnavirus major surface antigen family. In terms of assembly, in its internal form (Li-HBsAg), interacts with the capsid protein and with the isoform S. Interacts with host chaperone CANX. As to quaternary structure, associates with host chaperone CANX through its pre-S2 N glycan; this association may be essential for isoform M proper secretion. Interacts with isoform L. Interacts with the antigens of satellite virus HDV (HDVAgs); this interaction is required for encapsidation of HDV genomic RNA. Isoform M is N-terminally acetylated by host at a ratio of 90%, and N-glycosylated by host at the pre-S2 region. In terms of processing, myristoylated.

The protein localises to the virion membrane. In terms of biological role, the large envelope protein exists in two topological conformations, one which is termed 'external' or Le-HBsAg and the other 'internal' or Li-HBsAg. In its external conformation the protein attaches the virus to cell receptors and thereby initiating infection. This interaction determines the species specificity and liver tropism. This attachment induces virion internalization predominantly through caveolin-mediated endocytosis. The large envelope protein also assures fusion between virion membrane and endosomal membrane. In its internal conformation the protein plays a role in virion morphogenesis and mediates the contact with the nucleocapsid like a matrix protein. Functionally, the middle envelope protein plays an important role in the budding of the virion. It is involved in the induction of budding in a nucleocapsid independent way. In this process the majority of envelope proteins bud to form subviral lipoprotein particles of 22 nm of diameter that do not contain a nucleocapsid. This chain is Large envelope protein, found in Homo sapiens (Human).